A 456-amino-acid polypeptide reads, in one-letter code: Bifunctional protein GlmU (456 aa).

The tract at residues 1-229 is pyrophosphorylase; that stretch reads MLNSAMSVVI…ISETDGVNNR (229 aa). Residues 11-14, Lys-25, Gln-76, 81-82, 103-105, Gly-140, Glu-154, Asn-169, and Asn-227 contribute to the UDP-N-acetyl-alpha-D-glucosamine site; these read LAAG, GT, and YGD. Asp-105 serves as a coordination point for Mg(2+). Asn-227 serves as a coordination point for Mg(2+). Residues 230 to 250 form a linker region; sequence LQLSRLERIYQAEQAEKLLLS. The tract at residues 251–456 is N-acetyltransferase; it reads GVMLRDPARF…QGWQRPVKKK (206 aa). The UDP-N-acetyl-alpha-D-glucosamine site is built by Arg-333 and Lys-351. His-363 acts as the Proton acceptor in catalysis. Residues Tyr-366 and Asn-377 each coordinate UDP-N-acetyl-alpha-D-glucosamine. Acetyl-CoA contacts are provided by residues Ala-380, 386 to 387, Ser-405, Ala-423, and Arg-440; that span reads NY.

The protein in the N-terminal section; belongs to the N-acetylglucosamine-1-phosphate uridyltransferase family. It in the C-terminal section; belongs to the transferase hexapeptide repeat family. In terms of assembly, homotrimer. Mg(2+) is required as a cofactor.

It localises to the cytoplasm. The catalysed reaction is alpha-D-glucosamine 1-phosphate + acetyl-CoA = N-acetyl-alpha-D-glucosamine 1-phosphate + CoA + H(+). It catalyses the reaction N-acetyl-alpha-D-glucosamine 1-phosphate + UTP + H(+) = UDP-N-acetyl-alpha-D-glucosamine + diphosphate. Its pathway is nucleotide-sugar biosynthesis; UDP-N-acetyl-alpha-D-glucosamine biosynthesis; N-acetyl-alpha-D-glucosamine 1-phosphate from alpha-D-glucosamine 6-phosphate (route II): step 2/2. It functions in the pathway nucleotide-sugar biosynthesis; UDP-N-acetyl-alpha-D-glucosamine biosynthesis; UDP-N-acetyl-alpha-D-glucosamine from N-acetyl-alpha-D-glucosamine 1-phosphate: step 1/1. It participates in bacterial outer membrane biogenesis; LPS lipid A biosynthesis. Its function is as follows. Catalyzes the last two sequential reactions in the de novo biosynthetic pathway for UDP-N-acetylglucosamine (UDP-GlcNAc). The C-terminal domain catalyzes the transfer of acetyl group from acetyl coenzyme A to glucosamine-1-phosphate (GlcN-1-P) to produce N-acetylglucosamine-1-phosphate (GlcNAc-1-P), which is converted into UDP-GlcNAc by the transfer of uridine 5-monophosphate (from uridine 5-triphosphate), a reaction catalyzed by the N-terminal domain. The chain is Bifunctional protein GlmU from Salmonella gallinarum (strain 287/91 / NCTC 13346).